We begin with the raw amino-acid sequence, 354 residues long: 5,10-methenyltetrahydromethanopterin hydrogenase (354 aa).

The protein belongs to the HMD family.

It catalyses the reaction 5,10-methenyl-5,6,7,8-tetrahydromethanopterin + H2 = 5,10-methylenetetrahydromethanopterin + H(+). It functions in the pathway one-carbon metabolism; methanogenesis from CO(2); 5,10-methylene-5,6,7,8-tetrahydromethanopterin from 5,10-methenyl-5,6,7,8-tetrahydromethanopterin (hydrogen route): step 1/1. In terms of biological role, catalyzes the reversible reduction of methenyl-H(4)MPT(+) to methylene-H(4)MPT. The chain is 5,10-methenyltetrahydromethanopterin hydrogenase from Methanococcus maripaludis (strain C7 / ATCC BAA-1331).